The following is a 580-amino-acid chain: Xylulose kinase (580 aa).

H99, R170, D280, and N281 together coordinate substrate. ATP is bound by residues W355, 441 to 442 (GA), and N445.

It belongs to the FGGY kinase family. In terms of assembly, monomer.

The enzyme catalyses D-xylulose + ATP = D-xylulose 5-phosphate + ADP + H(+). Functionally, phosphorylates D-xylulose to produce D-xylulose 5-phosphate, a molecule that may play an important role in the regulation of glucose metabolism and lipogenesis. This chain is Xylulose kinase (XYLB), found in Pongo abelii (Sumatran orangutan).